The following is a 105-amino-acid chain: Large ribosomal subunit protein bL21 (105 aa).

The protein belongs to the bacterial ribosomal protein bL21 family. As to quaternary structure, part of the 50S ribosomal subunit. Contacts protein L20.

Its function is as follows. This protein binds to 23S rRNA in the presence of protein L20. In Rickettsia peacockii (strain Rustic), this protein is Large ribosomal subunit protein bL21.